The following is a 417-amino-acid chain: Probable pectate lyase 20 (417 aa).

The first 25 residues, 1–25, serve as a signal peptide directing secretion; the sequence is MAVTQILVVFASALLLSMFFTGVDS. 2 N-linked (GlcNAc...) asparagine glycosylation sites follow: Asn-29 and Asn-53. 3 residues coordinate Ca(2+): Asp-215, Asp-239, and Asp-243. Residue Arg-295 is part of the active site.

The protein belongs to the polysaccharide lyase 1 family. Requires Ca(2+) as cofactor.

The enzyme catalyses Eliminative cleavage of (1-&gt;4)-alpha-D-galacturonan to give oligosaccharides with 4-deoxy-alpha-D-galact-4-enuronosyl groups at their non-reducing ends.. It functions in the pathway glycan metabolism; pectin degradation; 2-dehydro-3-deoxy-D-gluconate from pectin: step 2/5. The protein is Probable pectate lyase 20 of Arabidopsis thaliana (Mouse-ear cress).